Consider the following 351-residue polypeptide: Delta(7)-sterol 5(6)-desaturase (351 aa).

A run of 3 helical transmembrane segments spans residues 88–108 (LSLF…VASF), 136–156 (GLGA…LELH), and 173–193 (VRLA…IYLL). Residues 180–305 (LFFILFTDFG…FTTLWDRLGG (126 aa)) enclose the Fatty acid hydroxylase domain. A Histidine box-1 motif is present at residues 194–198 (HRWLH). Positions 207–211 (HKKHH) match the Histidine box-2 motif. Residues 237-257 (HLFPMLFPLHKVSYLVLFTFV) traverse the membrane as a helical segment. The short motif at 282–286 (HTVHH) is the Histidine box-3 element.

The protein belongs to the sterol desaturase family. It depends on Fe cation as a cofactor.

It localises to the endoplasmic reticulum membrane. The catalysed reaction is a Delta(7)-sterol + 2 Fe(II)-[cytochrome b5] + O2 + 2 H(+) = a Delta(5),Delta(7)-sterol + 2 Fe(III)-[cytochrome b5] + 2 H2O. The protein operates within steroid metabolism; ergosterol biosynthesis; ergosterol from zymosterol: step 3/5. In terms of biological role, catalyzes the introduction of a C-5 double bond in the B ring of ergosterol. May contribute to the regulation of ergosterol biosynthesis. This Eremothecium gossypii (strain ATCC 10895 / CBS 109.51 / FGSC 9923 / NRRL Y-1056) (Yeast) protein is Delta(7)-sterol 5(6)-desaturase (ERG3).